Consider the following 150-residue polypeptide: Cyanate hydratase (150 aa).

Active-site residues include arginine 91, glutamate 94, and serine 117.

This sequence belongs to the cyanase family.

The catalysed reaction is cyanate + hydrogencarbonate + 3 H(+) = NH4(+) + 2 CO2. Functionally, catalyzes the reaction of cyanate with bicarbonate to produce ammonia and carbon dioxide. This is Cyanate hydratase from Synechococcus sp. (strain CC9311).